A 956-amino-acid polypeptide reads, in one-letter code: Transient receptor potential channel pyrexia (956 aa).

Residues 1-491 lie on the Cytoplasmic side of the membrane; it reads MENVRFSIIE…LFLKWRRIRK (491 aa). ANK repeat units follow at residues 132 to 161, 166 to 195, 198 to 227, 231 to 260, 265 to 294, 298 to 327, 331 to 362, and 366 to 395; these read RGRT…DPNR, KEVT…SINI, EKRS…DPNT, YTET…DVRS, GKVT…EVDC, SHQT…NVNA, DGRT…DVNK, and YGYT…DITA. Residues 492–512 form a helical membrane-spanning segment; the sequence is FFLMSLAYHTLFVILFTFYVI. Topologically, residues 513–525 are extracellular; that stretch reads WVYVRCCKKEELC. A helical transmembrane segment spans residues 526 to 546; it reads VAPGYVSTIGYLVIILNLILL. Residues 547–565 are Cytoplasmic-facing; the sequence is GKEVFQMAHGLRGYAKYWE. The chain crosses the membrane as a helical span at residues 566–584; sequence NWLQWTIGTGVLLCVTPET. At 585–601 the chain is on the extracellular side; it reads VRTDDLTAVPVWQHHVA. The chain crosses the membrane as a helical span at residues 602–622; it reads AIVILLVWLELMMLVGRFPIF. Residues 623 to 638 are Cytoplasmic-facing; that stretch reads GVYVQMFTKVAVNFAK. The chain crosses the membrane as a helical span at residues 639-659; that stretch reads FLLAYICLLVAFGLSFAVLFN. Residues 660-701 lie on the Extracellular side of the membrane; sequence DYPAFENITWSFLKSITMMSGELEFEDIFYGDYAVKFPVTAH. A glycan (N-linked (GlcNAc...) asparagine) is linked at asparagine 666. A helical transmembrane segment spans residues 702–722; that stretch reads IIFLSFVLLVTVILTNLMVGL. At 723-956 the chain is on the cytoplasmic side; the sequence is AVSDIQGLQV…VASSHIRRHR (234 aa).

The protein belongs to the transient receptor (TC 1.A.4) family. STrpC subfamily. Homooligomer; between isoform A and isoform B. Expressed in various peripheral nerves and the central nerves in embryos. In adults, it is expressed in sensory neurons lying beneath the bristles around eyes, neurons innervating the bristles on the back of thorax and neurons in maxillary palps, proboscis and antennae. Expressed in multidendritic neurons, which mediate temperature sensing, as well as non-multidendritic neurons in larval epidermis. Localizes ubiquitously throughout neurites.

The protein resides in the membrane. Functionally, receptor-activated non-selective cation channel involved in protection or tolerance from high temperature stress. Activated by temperatures above 40 degrees Celsius. More permeable to K(+) than to Na(+). May act in stress protection allow flies to survive in natural environments. The chain is Transient receptor potential channel pyrexia (pyx) from Drosophila melanogaster (Fruit fly).